The following is a 138-amino-acid chain: Ribulose bisphosphate carboxylase small subunit (138 aa).

The protein belongs to the RuBisCO small chain family. Heterohexadecamer of 8 large and 8 small subunits.

The protein resides in the plastid. The protein localises to the chloroplast. RuBisCO catalyzes two reactions: the carboxylation of D-ribulose 1,5-bisphosphate, the primary event in carbon dioxide fixation, as well as the oxidative fragmentation of the pentose substrate in the photorespiration process. Both reactions occur simultaneously and in competition at the same active site. Although the small subunit is not catalytic it is essential for maximal activity. The chain is Ribulose bisphosphate carboxylase small subunit from Porphyridium aerugineum (Red microalga).